Consider the following 473-residue polypeptide: Ribulose bisphosphate carboxylase large chain (473 aa).

2 residues coordinate substrate: asparagine 116 and threonine 166. The Proton acceptor role is filled by lysine 168. Lysine 170 is a binding site for substrate. 3 residues coordinate Mg(2+): lysine 194, aspartate 196, and glutamate 197. The residue at position 194 (lysine 194) is an N6-carboxylysine. Histidine 287 acts as the Proton acceptor in catalysis. Positions 288, 320, and 372 each coordinate substrate.

The protein belongs to the RuBisCO large chain family. Type I subfamily. In terms of assembly, heterohexadecamer of 8 large chains and 8 small chains. Requires Mg(2+) as cofactor.

It catalyses the reaction 2 (2R)-3-phosphoglycerate + 2 H(+) = D-ribulose 1,5-bisphosphate + CO2 + H2O. The enzyme catalyses D-ribulose 1,5-bisphosphate + O2 = 2-phosphoglycolate + (2R)-3-phosphoglycerate + 2 H(+). RuBisCO catalyzes two reactions: the carboxylation of D-ribulose 1,5-bisphosphate, the primary event in carbon dioxide fixation, as well as the oxidative fragmentation of the pentose substrate. Both reactions occur simultaneously and in competition at the same active site. The polypeptide is Ribulose bisphosphate carboxylase large chain (Nitrosomonas sp. (strain ENI-11)).